The following is a 343-amino-acid chain: 3-dehydroquinate synthase (343 aa).

NAD(+) contacts are provided by residues 61 to 66 (SGEKYK), 95 to 99 (GVISD), 119 to 120 (TT), Lys-132, Lys-141, and 159 to 162 (FLKT). Positions 174, 231, and 248 each coordinate Zn(2+).

It belongs to the sugar phosphate cyclases superfamily. Dehydroquinate synthase family. It depends on Co(2+) as a cofactor. Zn(2+) is required as a cofactor. The cofactor is NAD(+).

Its subcellular location is the cytoplasm. It catalyses the reaction 7-phospho-2-dehydro-3-deoxy-D-arabino-heptonate = 3-dehydroquinate + phosphate. It functions in the pathway metabolic intermediate biosynthesis; chorismate biosynthesis; chorismate from D-erythrose 4-phosphate and phosphoenolpyruvate: step 2/7. Functionally, catalyzes the conversion of 3-deoxy-D-arabino-heptulosonate 7-phosphate (DAHP) to dehydroquinate (DHQ). The polypeptide is 3-dehydroquinate synthase (Helicobacter pylori (strain P12)).